A 197-amino-acid polypeptide reads, in one-letter code: Nucleoid occlusion factor SlmA (197 aa).

One can recognise an HTH tetR-type domain in the interval 7-67 (INRREHILQC…GLIEFIEDAI (61 aa)). The segment at residues 30–49 (TTAKLAAEVGVSEAALYRHF) is a DNA-binding region (H-T-H motif).

It belongs to the nucleoid occlusion factor SlmA family. Homodimer. Interacts with FtsZ.

The protein resides in the cytoplasm. It is found in the nucleoid. Its function is as follows. Required for nucleoid occlusion (NO) phenomenon, which prevents Z-ring formation and cell division over the nucleoid. Acts as a DNA-associated cell division inhibitor that binds simultaneously chromosomal DNA and FtsZ, and disrupts the assembly of FtsZ polymers. SlmA-DNA-binding sequences (SBS) are dispersed on non-Ter regions of the chromosome, preventing FtsZ polymerization at these regions. The chain is Nucleoid occlusion factor SlmA from Shewanella denitrificans (strain OS217 / ATCC BAA-1090 / DSM 15013).